The following is a 417-amino-acid chain: Solanesyl diphosphate synthase 2, chloroplastic (417 aa).

The transit peptide at 1–60 (MMMSCRNIDLGTSVLDHSCSSSSTSRRFLFGNSSKTVCMIGGRSCVGNLVFLRRDLATCR) directs the protein to the chloroplast. 3 residues coordinate isopentenyl diphosphate: lysine 137, arginine 140, and histidine 175. Residues aspartate 182 and aspartate 186 each coordinate Mg(2+). Arginine 191 is a binding site for an all-trans-polyprenyl diphosphate. Residue arginine 192 coordinates isopentenyl diphosphate. An all-trans-polyprenyl diphosphate contacts are provided by lysine 268, threonine 269, glutamine 306, and lysine 323.

Belongs to the FPP/GGPP synthase family. In terms of assembly, homodimer. Interacts with FBN5. It depends on Mg(2+) as a cofactor. As to expression, higher expression in leaves than in roots.

It is found in the plastid. It localises to the chloroplast. It catalyses the reaction 5 isopentenyl diphosphate + (2E,6E,10E)-geranylgeranyl diphosphate = all-trans-nonaprenyl diphosphate + 5 diphosphate. Its function is as follows. Involved in providing solanesyl diphosphate for plastoquinone-9 (PQ-9) formation in plastids. Catalyzes the elongation of the prenyl side chain of PQ-9 in plastids. Contributes to the biosynthesis of plastochromanol-8 (PC-8) in plastids. Does not contribute to the synthesis of tocopherol or ubiquinone. PQ-9 and PC-8 are lipophilic antioxidants that act as protectant against photooxidative stress under high light stress conditions. Prefers geranylgeranyl diphosphate to farnesyl diphosphate as substrate. No activity with geranyl diphosphate or dimethylallyl diphosphate as substrate. The sequence is that of Solanesyl diphosphate synthase 2, chloroplastic from Arabidopsis thaliana (Mouse-ear cress).